The chain runs to 154 residues: 17 kDa surface antigen (154 aa).

Residues 1–19 form the signal peptide; the sequence is MKLLSKIMIIALAASMLQA. A lipid anchor (N-palmitoyl cysteine) is attached at C20. C20 is lipidated: S-diacylglycerol cysteine.

This sequence belongs to the rickettsiale 17 kDa surface antigen family.

The protein resides in the cell outer membrane. This chain is 17 kDa surface antigen (omp), found in Rickettsia rhipicephali.